Consider the following 97-residue polypeptide: UPF0416 protein RC0826 (97 aa).

The signal sequence occupies residues 1 to 33; that stretch reads MRIFVKAAISTAAWRFYAHPTVAMGICVGTALA.

The protein belongs to the UPF0416 family.

The sequence is that of UPF0416 protein RC0826 from Rickettsia conorii (strain ATCC VR-613 / Malish 7).